Reading from the N-terminus, the 480-residue chain is MAAVEAETGLLTLESLPTDPLLLILSFVDYRDLINCCYVSRRLSQLSTHDPLWRRHCKKYWLITEEEKARKNQCWKSLFIATYSDVGRYINHYAAIKKAWDDLKKYLEPRCPRMVLSLKEGAREEDLDAVEAQIGCKLPDDYRCSYRIHNGQKLVVPGLLGSMALSNHYRSEDLLDVDTAAGGFQQRQGLKYCLPLTFCIHTGLSQYIAVEAAEGRNKNEVFYQCPDQMARNPAAIDMFIIGATFTDWFTSYVNNVVSGGFPIIRDQIFRYIHDPECVATTGDITVSVSTSFLPELSSVHPPHYFFTYRIRIEMSRDALPEKACQLDSRYWRITNAKGDVEEVQGPGVVGEFPIISPGRIYEYTSCTTFSTTSGYMEGYYTFHFLYFKDKVFNVAIPRFHMACPTFRVSIARLEMGPDEYEEMEEEAEEEEEEENDDSADMDESDESDEDENESDEGEGEERRRRVFDVPIRRRRCSRLF.

The F-box domain occupies 10–56 (LLTLESLPTDPLLLILSFVDYRDLINCCYVSRRLSQLSTHDPLWRRH). The region spanning 278-408 (VATTGDITVS…FHMACPTFRV (131 aa)) is the ApaG domain. The span at 419-459 (EYEEMEEEAEEEEEEENDDSADMDESDESDEDENESDEGEG) shows a compositional bias: acidic residues. Residues 419 to 464 (EYEEMEEEAEEEEEEENDDSADMDESDESDEDENESDEGEGEERRR) form a disordered region.

In terms of assembly, part of a SCF (SKP1-cullin-F-box) protein ligase complex SCF(FBXO3) consisting of FBXO3, SKP1, CUL1 and RBX1. Interacts with PML, interaction is direct and takes place either alone or within the SCF complex.

The protein localises to the nucleus. The protein operates within protein modification; protein ubiquitination. In terms of biological role, substrate recognition component of the SCF (SKP1-CUL1-F-box protein)-type E3 ubiquitin ligase complex, SCF(FBXO3), which mediates the ubiquitination and subsequent proteasomal degradation of target proteins. Mediates the ubiquitination of HIPK2 and probably that of EP300, leading to rapid degradation by the proteasome. In the presence of PML, HIPK2 ubiquitination still occurs, but degradation is prevented. PML, HIPK2 and FBXO3 may act synergically to activate p53/TP53-dependent transactivation. The SCF(FBXO3) also acts as a regulator of inflammation by mediating ubiquitination and degradation of FBXL2 in response to lipopolysaccharide (LPS). The SCF(FBXO3) complex specifically recognizes FBXL2 phosphorylated at 'Thr-404' and promotes its ubiquitination. The sequence is that of F-box only protein 3 (Fbxo3) from Rattus norvegicus (Rat).